The sequence spans 142 residues: Small ribosomal subunit protein bS6 (142 aa).

Positions 110 to 133 (NKKPSHAKEKHEKTEHTHSHHLEE) are enriched in basic and acidic residues. The tract at residues 110–142 (NKKPSHAKEKHEKTEHTHSHHLEEAESVGSHSE) is disordered.

The protein belongs to the bacterial ribosomal protein bS6 family.

Binds together with bS18 to 16S ribosomal RNA. This chain is Small ribosomal subunit protein bS6, found in Helicobacter pylori (strain HPAG1).